The chain runs to 273 residues: SPRY domain-containing SOCS box protein 1 (273 aa).

Phosphotyrosine is present on tyrosine 31. The B30.2/SPRY domain maps to 33–231 (KPTRLDLLLD…IRMRYLNGLD (199 aa)). In terms of domain architecture, SOCS box spans 232-273 (PEPLPLMDLCRRSVRLALGKERLGAIPALPLPASLKAYLLYQ).

It belongs to the SPSB family. In terms of assembly, component of the probable ECS(SPSB1) E3 ubiquitin-protein ligase complex which contains CUL5, RNF7/RBX2, Elongin BC complex and SPSB1. Interacts with CUL5, RNF7, ELOB and ELOC. Directly interacts with MET tyrosine kinase domain in the presence and in the absence of HGF, however HGF treatment has a positive effect on this interaction. When phosphorylated, interacts with RASA1 without affecting its stability. Interacts (via B30.2/SPRY domain) with PAWR; this interaction is direct and occurs in association with the Elongin BC complex. Interacts with EPHB2. Interacts with NOS2.

The protein resides in the cytoplasm. The protein localises to the cytosol. Its pathway is protein modification; protein ubiquitination. Its function is as follows. Substrate recognition component of a SCF-like ECS (Elongin BC-CUL2/5-SOCS-box protein) E3 ubiquitin-protein ligase complex which mediates the ubiquitination and subsequent proteasomal degradation of target proteins. Negatively regulates nitric oxide (NO) production and limits cellular toxicity in activated macrophages by mediating the ubiquitination and proteasomal degradation of NOS2. Acts as a bridge which links the NOS2 with the ECS E3 ubiquitin ligase complex components ELOC and CUL5. This is SPRY domain-containing SOCS box protein 1 (Spsb1) from Mus musculus (Mouse).